We begin with the raw amino-acid sequence, 226 residues long: PKHD-type hydroxylase Sfri_0612 (226 aa).

Residues Lys77 to Ser177 form the Fe2OG dioxygenase domain. Fe cation is bound by residues His95, Asp97, and His158. Arg168 is a binding site for 2-oxoglutarate.

The cofactor is Fe(2+). L-ascorbate serves as cofactor.

The polypeptide is PKHD-type hydroxylase Sfri_0612 (Shewanella frigidimarina (strain NCIMB 400)).